The primary structure comprises 323 residues: Aldo-keto reductase family 1 member C13 (323 aa).

NAD(+) contacts are provided by residues 20–24 (GFGTY), aspartate 50, and tyrosine 55. Residue tyrosine 55 is the Proton donor of the active site. Residue histidine 117 coordinates substrate. NAD(+) is bound by residues 166–167 (SN), glutamine 190, 216–224 (YGALGTQRY), and 270–280 (QSFKENEMREN).

Belongs to the aldo/keto reductase family.

Functionally, catalyzes the dehydrogenation of 17-beta-hydroxysteroids. May also exhibit significant activity with a variety of cyclic and alicyclic alcohols. Uses both NAD and NADP, but the activity is much greater with NAD than with NADP. This Mus musculus (Mouse) protein is Aldo-keto reductase family 1 member C13 (Akr1c13).